The following is a 166-amino-acid chain: MKFALVLLGVCAFYLVNATGDLETELEASELQELQEALDLIGETPLESLEAEELEEARKFKWGKLFSTAKKLYKKGKKLSKNKNFKKALKFGKQLAKNLQAGEEHEPGTPVGNNKCWAIGTTCSDDCDCCPEHHCHCPAGKWLPGLFRCTCQVTESDKVNKCPPAE.

The N-terminal stretch at 1-18 (MKFALVLLGVCAFYLVNA) is a signal peptide. The propeptide occupies 19-58 (TGDLETELEASELQELQEALDLIGETPLESLEAEELEEAR). A linear cationic cytotoxin domain region spans residues 59-99 (KFKWGKLFSTAKKLYKKGKKLSKNKNFKKALKFGKQLAKNL). In terms of domain architecture, Oxytoxin-type inhibitor cystine knot (ICK) spans 113–166 (NNKCWAIGTTCSDDCDCCPEHHCHCPAGKWLPGLFRCTCQVTESDKVNKCPPAE). 5 disulfides stabilise this stretch: C116–C130, C123–C135, C127–C162, C129–C151, and C137–C149.

This sequence belongs to the spiderine family. Cationic/spiderine subfamily. As to expression, expressed by the venom gland.

The protein localises to the secreted. Has antimicrobial, insecticidal, cytolytic and cytotoxic activity. Active against E.coli DH5alpha, E.faecalis VKM B 871, B.subtilis VKM B 501, A.globiformis VKM Ac 1112, P.aeruginosa PAO1 and S.aureus 209P in submicromolar or low micromolar ranges. Lyses human erythrocytes. Kills HeLA and A549 cells. The chain is Spiderine-1a from Oxyopes takobius (Lynx spider).